A 243-amino-acid chain; its full sequence is Adapter protein MecA (243 aa).

Positions 119–140 (NQVEDGQGIAHNPTKDTNDLDP) are disordered.

Belongs to the MecA family. As to quaternary structure, homodimer.

Enables the recognition and targeting of unfolded and aggregated proteins to the ClpC protease or to other proteins involved in proteolysis. In Lactiplantibacillus plantarum (strain ATCC BAA-793 / NCIMB 8826 / WCFS1) (Lactobacillus plantarum), this protein is Adapter protein MecA.